The chain runs to 387 residues: MTDNSSISLTPADLEHVPLQPTRLKQVGGDQACIKLSLDAREQTALDALAAKVSHAFVTGAGGFLGKAICQRLIAAGIKVTGFARGRYLELEALGVTMVQGDLVNPEQVKQAMQGCDIVFHVASKAGVWGDRDSYFCPNVKGAANVIAACKALKINKLVYTSTPSVTFAGEDESGINESTPYASRFLNYYAHSKAIAEKMMLDANQSSSTNAAYVLKTVALRPHLIWGPNDPHLVPRVLARGRLGKLKLVGREDKLVDTIYIDNAAYAHVLAALELCQATPKCQGKAYFISNDEPVTMAKMLNMILACDGLPPVTQRVPQMLAYAVGAVLETAYRLLNKQEEPIMTRFVAKQLSCSHYFDISAAKQDFGYSALVSIEEGMKRLKASL.

The active-site Proton acceptor is the Tyr190. Lys194 provides a ligand contact to NADP(+).

Belongs to the 3-beta-HSD family.

It carries out the reaction a (2R,3S)-2-alkyl-3-hydroxyalkanoate + NADP(+) = an (R)-2-alkyl-3-oxoalkanoate + NADPH + H(+). In terms of biological role, involved in olefin biosynthesis. Catalyzes the reversible stereospecific NADPH-dependent reduction of 2-alkyl-3-oxoalkanoic acids to 2-alkyl-3-hydroxyalkanoic acids. The S.oneidensis oleABCD genes produce 3,6,9,12,15,19,22,25,28-hentriacontanonaene, which may aid the cells in adapting to a sudden drop in temperature. The sequence is that of 2-alkyl-3-oxoalkanoate reductase from Shewanella oneidensis (strain ATCC 700550 / JCM 31522 / CIP 106686 / LMG 19005 / NCIMB 14063 / MR-1).